A 293-amino-acid polypeptide reads, in one-letter code: NAD kinase (293 aa).

The active-site Proton acceptor is the Asp73. Residues 73–74 (DG), 147–148 (NE), Arg175, Asp177, and 188–193 (TAYSMS) each bind NAD(+).

It belongs to the NAD kinase family. Requires a divalent metal cation as cofactor.

Its subcellular location is the cytoplasm. It carries out the reaction NAD(+) + ATP = ADP + NADP(+) + H(+). Involved in the regulation of the intracellular balance of NAD and NADP, and is a key enzyme in the biosynthesis of NADP. Catalyzes specifically the phosphorylation on 2'-hydroxyl of the adenosine moiety of NAD to yield NADP. The chain is NAD kinase from Colwellia psychrerythraea (strain 34H / ATCC BAA-681) (Vibrio psychroerythus).